A 258-amino-acid chain; its full sequence is Cell division protein ZapD (258 aa).

It belongs to the ZapD family. Interacts with FtsZ.

It localises to the cytoplasm. Cell division factor that enhances FtsZ-ring assembly. Directly interacts with FtsZ and promotes bundling of FtsZ protofilaments, with a reduction in FtsZ GTPase activity. This chain is Cell division protein ZapD, found in Coxiella burnetii (strain RSA 331 / Henzerling II).